The chain runs to 271 residues: Ribosomal RNA small subunit methyltransferase A (271 aa).

The S-adenosyl-L-methionine site is built by Asn-18, Leu-20, Gly-45, Glu-66, Asp-91, and Asn-112.

It belongs to the class I-like SAM-binding methyltransferase superfamily. rRNA adenine N(6)-methyltransferase family. RsmA subfamily.

The protein localises to the cytoplasm. The catalysed reaction is adenosine(1518)/adenosine(1519) in 16S rRNA + 4 S-adenosyl-L-methionine = N(6)-dimethyladenosine(1518)/N(6)-dimethyladenosine(1519) in 16S rRNA + 4 S-adenosyl-L-homocysteine + 4 H(+). Functionally, specifically dimethylates two adjacent adenosines (A1518 and A1519) in the loop of a conserved hairpin near the 3'-end of 16S rRNA in the 30S particle. May play a critical role in biogenesis of 30S subunits. The polypeptide is Ribosomal RNA small subunit methyltransferase A (Vibrio atlanticus (strain LGP32) (Vibrio splendidus (strain Mel32))).